The following is a 123-amino-acid chain: Basic myotoxic phospholipase A2 PhTX-II (123 aa).

Intrachain disulfides connect Cys-26-Cys-116, Cys-28-Cys-45, Cys-44-Cys-95, Cys-50-Cys-123, Cys-51-Cys-88, Cys-58-Cys-81, and Cys-75-Cys-86. Ca(2+)-binding residues include Tyr-27, Gly-29, and Gly-31. Residue His-48 is part of the active site. Asp-49 provides a ligand contact to Ca(2+). Asp-89 is an active-site residue.

Monomer. The cofactor is Ca(2+). Expressed by the venom gland.

It is found in the secreted. It carries out the reaction a 1,2-diacyl-sn-glycero-3-phosphocholine + H2O = a 1-acyl-sn-glycero-3-phosphocholine + a fatty acid + H(+). With respect to regulation, P-bromophenacyl bromide (BPB) completely inhibits the catalytic and edematogenic activities. Enzymatic activity is also diminished by EDTA, heparin and crotapotins F2 and F3 from C.d.collilineatus. Inhibited by divalent cations different from calcium ions (cadmium, magnesium, manganese, zinc), since they act as competitive antagonists of this cofactor. Its function is as follows. Snake venom phospholipase A2 (PLA2) that induces myotoxicity and local edema in mice. In addition, it causes neuromuscular blockade in avian neuromuscular preparations with a significant direct action on skeletal muscle function. Myotoxic action is exerted by both enzymatic and non-enzymatic mechanisms. PLA2 catalyzes the calcium-dependent hydrolysis of the 2-acyl groups in 3-sn-phosphoglycerides. The protein is Basic myotoxic phospholipase A2 PhTX-II of Bothrocophias hyoprora (Amazonian hognose viper).